The chain runs to 381 residues: Pentatricopeptide repeat-containing protein 2, mitochondrial (381 aa).

The PPR repeat unit spans residues Thr-159–Lys-193. Ser-375 bears the Phosphoserine mark.

This sequence belongs to the PTCD2 family. High expression in heart and liver and low expression in kidney, brain and testis.

It localises to the mitochondrion. Functionally, involved in mitochondrial RNA maturation and mitochondrial respiratory chain function. In Mus musculus (Mouse), this protein is Pentatricopeptide repeat-containing protein 2, mitochondrial (Ptcd2).